The following is a 378-amino-acid chain: MKFPEFKDYYQQLISTSSISSTDSSWDEGNAEVINKLAQWCEDLGCEVEIEEIEKGKLNLLAKLGSGEGGLLLAGHTDTVPYDEGRWNYEPHALTEANDRFYGLGTADMKGFFAFILEAIKNINWKDQSKPLYILATCDEETTMLGARHFASNTKIQPDYCIIGEPTSLKPIRGHKGHVANAIRVTGKSGHSSDPAHGVNALEIMNEIMFALMTLKNKLVKEYHNPGFSIPYPTLNLGHIHGGDSPNRICGCCELHYDVRPLPGISLDGLDNMLRDALKEVEAKWPGRIDITPLHEPIPGYECSADSPIVTSTADICGQDVETVNYCTEAPFLQDLCPTLVLGPGSIEQAHQPDEYLAFSFIDPTISVLSKLMYKHCF.

Residue histidine 76 coordinates Zn(2+). The active site involves aspartate 78. Residue aspartate 108 coordinates Zn(2+). The active site involves glutamate 140. Positions 141, 165, and 351 each coordinate Zn(2+).

Belongs to the peptidase M20A family. ArgE subfamily. Homodimer. Zn(2+) serves as cofactor. The cofactor is Co(2+). It depends on glutathione as a cofactor.

The protein resides in the cytoplasm. The catalysed reaction is N(2)-acetyl-L-ornithine + H2O = L-ornithine + acetate. It functions in the pathway amino-acid biosynthesis; L-arginine biosynthesis; L-ornithine from N(2)-acetyl-L-ornithine (linear): step 1/1. In terms of biological role, catalyzes the hydrolysis of the amide bond of N(2)-acetylated L-amino acids. Cleaves the acetyl group from N-acetyl-L-ornithine to form L-ornithine, an intermediate in L-arginine biosynthesis pathway, and a branchpoint in the synthesis of polyamines. The sequence is that of Acetylornithine deacetylase from Aliivibrio fischeri (strain MJ11) (Vibrio fischeri).